The primary structure comprises 423 residues: Torsin-4A (423 aa).

A disordered region spans residues 47–68 (PGGGPDVGTGAPRPGCSPRAPR). Phosphoserine is present on residues serine 63 and serine 81. Threonine 89 is modified (phosphothreonine). Serine 106 carries the phosphoserine modification. A helical transmembrane segment spans residues 122-138 (CLLLLVAIVGFQVLNAI). 194 to 201 (GPSGVGKS) contacts ATP.

This sequence belongs to the ClpA/ClpB family. Torsin subfamily.

It localises to the membrane. The chain is Torsin-4A (TOR4A) from Homo sapiens (Human).